Reading from the N-terminus, the 362-residue chain is Nuclear hormone receptor family member nhr-77 (362 aa).

The segment at residues 8 to 82 (DPICPVCEFP…AGMKRNLVKQ (75 aa)) is a DNA-binding region (nuclear receptor). 2 consecutive NR C4-type zinc fingers follow at residues 11 to 32 (CPVC…CGAC) and 48 to 69 (CEKN…FDYC). One can recognise an NR LBD domain in the interval 145-362 (EAEKDVSKIL…KLYIQLGLPF (218 aa)).

This sequence belongs to the nuclear hormone receptor family.

Its subcellular location is the nucleus. Functionally, orphan nuclear receptor. This Caenorhabditis elegans protein is Nuclear hormone receptor family member nhr-77 (nhr-77).